The sequence spans 406 residues: Phosphopentomutase (406 aa).

D10, D305, H310, D346, H347, and H358 together coordinate Mn(2+).

It belongs to the phosphopentomutase family. Mn(2+) is required as a cofactor.

It localises to the cytoplasm. The catalysed reaction is 2-deoxy-alpha-D-ribose 1-phosphate = 2-deoxy-D-ribose 5-phosphate. It carries out the reaction alpha-D-ribose 1-phosphate = D-ribose 5-phosphate. The protein operates within carbohydrate degradation; 2-deoxy-D-ribose 1-phosphate degradation; D-glyceraldehyde 3-phosphate and acetaldehyde from 2-deoxy-alpha-D-ribose 1-phosphate: step 1/2. Isomerase that catalyzes the conversion of deoxy-ribose 1-phosphate (dRib-1-P) and ribose 1-phosphate (Rib-1-P) to deoxy-ribose 5-phosphate (dRib-5-P) and ribose 5-phosphate (Rib-5-P), respectively. The protein is Phosphopentomutase of Methylobacterium radiotolerans (strain ATCC 27329 / DSM 1819 / JCM 2831 / NBRC 15690 / NCIMB 10815 / 0-1).